The sequence spans 154 residues: uncharacterized protein (154 aa).

This is an uncharacterized protein from Methanocaldococcus jannaschii (strain ATCC 43067 / DSM 2661 / JAL-1 / JCM 10045 / NBRC 100440) (Methanococcus jannaschii).